Reading from the N-terminus, the 303-residue chain is Sushi domain-containing protein 6 (303 aa).

Positions methionine 1 to alanine 39 are cleaved as a signal peptide. In terms of domain architecture, Sushi spans serine 40–leucine 104. Residues serine 40–serine 120 are Extracellular-facing. Disulfide bonds link cysteine 42–cysteine 89 and cysteine 74–cysteine 102. The helical transmembrane segment at isoleucine 121–leucine 141 threads the bilayer. At leucine 142–alanine 303 the chain is on the cytoplasmic side. Disordered stretches follow at residues valine 199–glycine 237 and glycine 263–isoleucine 282.

The protein localises to the membrane. Functionally, may play a role in growth-suppressive activity and cell death. May be involved in the production of chemokine molecules in umbilical vein endothelial cells (HUVECs) cultured in THP1 monocyte LPS-induced medium. Plays a role in preventing tumor onset. The polypeptide is Sushi domain-containing protein 6 (Homo sapiens (Human)).